Reading from the N-terminus, the 129-residue chain is Snaclec rhodocetin subunit beta (129 aa).

The region spanning Arg-3 to Phe-125 is the C-type lectin domain. 3 cysteine pairs are disulfide-bonded: Cys-4-Cys-15, Cys-32-Cys-123, and Cys-98-Cys-115.

Heterotetramer of subunit alpha, beta, gamma and delta; only the gamma and the delta subunits are disulfide-linked. Alpha-beta heterodimer and gamma-delta heterodimer associate orthogonally, giving a cruciform conformation. This heterotetramer may covalently dimerizes thanks to the gamma subunit. Expressed by the venom gland.

It is found in the secreted. Its function is as follows. Potent inhibitor of collagen-induced platelet aggregation. It acts by binding to the integrin alpha2A domain and blocks collagen binding to integrin alpha-2/beta-1 (ITGA2/ITGB1). The gamma/delta subunits mainly contribute to this activity. This is Snaclec rhodocetin subunit beta from Calloselasma rhodostoma (Malayan pit viper).